The chain runs to 469 residues: Glutamine synthetase (469 aa).

The region spanning 13–97 (NEVKFVDLRF…IRCDILEPAT (85 aa)) is the GS beta-grasp domain. The 365-residue stretch at 105 to 469 (PRSIAKRAEE…PLEFELYYSV (365 aa)) folds into the GS catalytic domain. Mg(2+) contacts are provided by E130 and E132. Residue E208 coordinates ATP. Residues E213 and E221 each coordinate Mg(2+). Residues 265-266 (NG) and G266 each bind L-glutamate. H270 is a Mg(2+) binding site. ATP-binding positions include 272 to 274 (HQS) and S274. Residues R322, E328, and R340 each contribute to the L-glutamate site. R340, R345, and K353 together coordinate ATP. E358 contacts Mg(2+). Residue R360 participates in L-glutamate binding. Y398 is modified (O-AMP-tyrosine).

It belongs to the glutamine synthetase family. In terms of assembly, oligomer of 12 subunits arranged in the form of two hexameric ring. Requires Mg(2+) as cofactor.

The protein resides in the cytoplasm. The catalysed reaction is L-glutamate + NH4(+) + ATP = L-glutamine + ADP + phosphate + H(+). With respect to regulation, the activity of this enzyme could be controlled by adenylation under conditions of abundant glutamine. Functionally, catalyzes the ATP-dependent biosynthesis of glutamine from glutamate and ammonia. This is Glutamine synthetase (glnAv) from Vibrio cholerae serotype O1 (strain ATCC 39315 / El Tor Inaba N16961).